The sequence spans 255 residues: UPF0246 protein DP0358 (255 aa).

It belongs to the UPF0246 family.

This chain is UPF0246 protein DP0358, found in Desulfotalea psychrophila (strain LSv54 / DSM 12343).